Here is a 502-residue protein sequence, read N- to C-terminus: Glycerol kinase (502 aa).

Thr-14 is an ADP binding site. Positions 14, 15, and 16 each coordinate ATP. Thr-14 is a binding site for sn-glycerol 3-phosphate. Arg-18 serves as a coordination point for ADP. Residues Arg-84, Glu-85, and Tyr-136 each coordinate sn-glycerol 3-phosphate. Glycerol is bound by residues Arg-84, Glu-85, and Tyr-136. His-232 bears the Phosphohistidine; by HPr mark. Asp-246 serves as a coordination point for sn-glycerol 3-phosphate. Glycerol is bound by residues Asp-246 and Gln-247. ADP contacts are provided by Thr-268 and Gly-311. 4 residues coordinate ATP: Thr-268, Gly-311, Gln-315, and Gly-412. Positions 412 and 416 each coordinate ADP.

The protein belongs to the FGGY kinase family. As to quaternary structure, homotetramer and homodimer (in equilibrium). Post-translationally, the phosphoenolpyruvate-dependent sugar phosphotransferase system (PTS), including enzyme I, and histidine-containing protein (HPr) are required for the phosphorylation, which leads to the activation of the enzyme.

It catalyses the reaction glycerol + ATP = sn-glycerol 3-phosphate + ADP + H(+). It functions in the pathway polyol metabolism; glycerol degradation via glycerol kinase pathway; sn-glycerol 3-phosphate from glycerol: step 1/1. Activated by phosphorylation and inhibited by fructose 1,6-bisphosphate (FBP). Functionally, key enzyme in the regulation of glycerol uptake and metabolism. Catalyzes the phosphorylation of glycerol to yield sn-glycerol 3-phosphate. This chain is Glycerol kinase, found in Streptococcus pneumoniae (strain Hungary19A-6).